A 156-amino-acid polypeptide reads, in one-letter code: Large ribosomal subunit protein uL15 (156 aa).

The interval 29–48 (CGKGKTSGRGHKGQKARSGV) is disordered. Residues 34-43 (TSGRGHKGQK) show a composition bias toward basic residues.

Belongs to the universal ribosomal protein uL15 family. As to quaternary structure, part of the 50S ribosomal subunit.

Its function is as follows. Binds to the 23S rRNA. The polypeptide is Large ribosomal subunit protein uL15 (Ehrlichia chaffeensis (strain ATCC CRL-10679 / Arkansas)).